The following is a 906-amino-acid chain: MSRFFANGSDSESESSEEEVQATNFNKASAFQFSDDEEEVKRVVRSTKEKRYENLTNIIKTIRNHKKIKDIPNTLSSFEDLTKAYTKALPVISKEENGITPRFYIRCLAELEDFINEVWEDREGRKNLSKNNSKSLGTLRQKVRKYIKDFEDDLSRFREAPDQESEAEDEEAAQDSDGGDAGDDSDAGIKREPAEAAPKVAKTVPAKAAPADDDDSDDSIDWDSDSETETESSDDENQYQNMRERFLKRTTEKEEKDDDKRKDKRKEQKIKIRKRPEDDEDGEWETVVKGHVVEKPKMFEKDAEIDIPLVLAKLVEIMSARGKKRTDRRLQIDLLFELRDISDQHNLGTAVSVKIHFNIISAIFDYNQKISEPMKLEHWALLLEVMQSMLKLLLVNPDIHMSESVAEEHEELATSPFYVRGCPLAAVERLDDEFTKLLKECDPHSNDYVSRLKDEVNVVKTIELVLQYFENDGNNNERCRIYLRKIEHLYYKFDPEVLKKKRGEIPQNTQTSVDVMDRLCKFIYAKDDTDRIRTRAILAHIYHHAMHDNWFQARDLVLMSHLQDNIDAADPATRILYNRMMANLGLCAFRQENIKDAHHCLVDLMVTGKPKELLAQGLLPQRQHERSAEQEKIEKQRQMPFHMHINLELLECVYLVSAMLLEIPYIAAHEFDARRRMISKTFYQQLRSSERQSLVGPPESMREHVVAAAKAMRCGNWQACANFIVNKKMNTKVWDLFYESDRVREMLTKFIKEESLRTYLFTYSNVYTSISIPSLAQMYELPVQKVHSIISKMIINEELMASLDDPTETVVMHRSEPSRLQALAMQFVDKVTNLVDVNEKVFDMKQGNFFQRGNMGNRGDRGYNRNQDGNWGGQLRDIKRIRGQRIQRGRKHQQQQQQQVQTIDEE.

A disordered region spans residues methionine 1 to alanine 22. Positions serine 11–valine 20 are enriched in acidic residues. Phosphoserine is present on residues serine 34, serine 165, serine 176, and serine 185. The segment at arginine 158 to glutamate 283 is disordered. Residues aspartate 162 to aspartate 186 show a composition bias toward acidic residues. The span at glutamate 195–alanine 209 shows a compositional bias: low complexity. Over residues alanine 211–asparagine 237 the composition is skewed to acidic residues. Over residues methionine 242–isoleucine 270 the composition is skewed to basic and acidic residues. The region spanning phenylalanine 641–proline 817 is the PCI domain. Disordered regions lie at residues glycine 853–glycine 873 and glutamine 887–glutamate 906. Residues glutamine 894–glutamate 906 show a composition bias toward low complexity.

This sequence belongs to the eIF-3 subunit C family. In terms of assembly, component of the eukaryotic translation initiation factor 3 (eIF-3) complex. The eIF-3 complex interacts with pix.

The protein resides in the cytoplasm. Functionally, component of the eukaryotic translation initiation factor 3 (eIF-3) complex, which is involved in protein synthesis of a specialized repertoire of mRNAs and, together with other initiation factors, stimulates binding of mRNA and methionyl-tRNAi to the 40S ribosome. The eIF-3 complex specifically targets and initiates translation of a subset of mRNAs involved in cell proliferation. The protein is Eukaryotic translation initiation factor 3 subunit C of Drosophila ananassae (Fruit fly).